Consider the following 72-residue polypeptide: Protein kish-A (72 aa).

A signal peptide spans 1–26 (MSAIFNFQSLLIVILLLICTCAYLRA). The Extracellular segment spans residues 27–53 (LVPNLLDKNKTGILGIFWKCARIGERK). Asparagine 35 carries N-linked (GlcNAc...) asparagine glycosylation. A helical transmembrane segment spans residues 54–71 (SPYVAVCCVVMAFSILFM). A topological domain (cytoplasmic) is located at residue glutamine 72.

It belongs to the KISH family.

The protein localises to the golgi apparatus membrane. Involved in the early part of the secretory pathway. The sequence is that of Protein kish-A (tmem167a) from Xenopus tropicalis (Western clawed frog).